The primary structure comprises 738 residues: Melanotransferrin (738 aa).

A signal peptide spans 1 to 19; sequence MRLLSVTFWLLLSLRTVVC. 2 consecutive Transferrin-like domains span residues 23–357 and 366–706; these read VQWC…GLLC and LRWC…GMLS. Cystine bridges form between cysteine 26–cysteine 63 and cysteine 36–cysteine 54. Residues aspartate 78 and tyrosine 107 each contribute to the Fe(3+) site. An N-linked (GlcNAc...) asparagine glycan is attached at asparagine 118. Intrachain disulfides connect cysteine 130–cysteine 216, cysteine 172–cysteine 189, cysteine 186–cysteine 199, and cysteine 257–cysteine 271. Residue threonine 132 participates in hydrogencarbonate binding. Asparagine 135 is a glycosylation site (N-linked (GlcNAc...) asparagine). Residues arginine 136, valine 138, and glycine 139 each coordinate hydrogencarbonate. Tyrosine 210 contributes to the Fe(3+) binding site. Residues histidine 279 and tyrosine 451 each coordinate Fe(3+). Serine 462 is modified (phosphoserine). Asparagine 515 carries N-linked (GlcNAc...) asparagine glycosylation. 2 residues coordinate Fe(3+): tyrosine 556 and histidine 625. A lipid anchor (GPI-anchor amidated cysteine) is attached at cysteine 709. The propeptide at 710 to 738 is removed in mature form; it reads SGAGAAVQRVPLLALLLLTLAAGLLPRVL.

Belongs to the transferrin family.

It is found in the cell membrane. Functionally, involved in iron cellular uptake. Seems to be internalized and then recycled back to the cell membrane. Binds a single atom of iron per subunit. Could also bind zinc. The polypeptide is Melanotransferrin (Meltf) (Mus musculus (Mouse)).